Consider the following 91-residue polypeptide: Small ribosomal subunit protein uS19 (91 aa).

Belongs to the universal ribosomal protein uS19 family.

Its function is as follows. Protein S19 forms a complex with S13 that binds strongly to the 16S ribosomal RNA. The protein is Small ribosomal subunit protein uS19 of Pseudomonas paraeruginosa (strain DSM 24068 / PA7) (Pseudomonas aeruginosa (strain PA7)).